The following is a 242-amino-acid chain: Segregation and condensation protein A (242 aa).

The protein belongs to the ScpA family. In terms of assembly, component of a cohesin-like complex composed of ScpA, ScpB and the Smc homodimer, in which ScpA and ScpB bind to the head domain of Smc. The presence of the three proteins is required for the association of the complex with DNA.

It is found in the cytoplasm. In terms of biological role, participates in chromosomal partition during cell division. May act via the formation of a condensin-like complex containing Smc and ScpB that pull DNA away from mid-cell into both cell halves. This Lactococcus lactis subsp. cremoris (strain MG1363) protein is Segregation and condensation protein A.